The sequence spans 214 residues: Large ribosomal subunit protein uL16 (214 aa).

It belongs to the universal ribosomal protein uL16 family. As to quaternary structure, component of the large ribosomal subunit. Mature ribosomes consist of a small (40S) and a large (60S) subunit. The 40S subunit contains about 33 different proteins and 1 molecule of RNA (18S). The 60S subunit contains about 49 different proteins and 3 molecules of RNA (28S, 5.8S and 5S).

This Caenorhabditis elegans protein is Large ribosomal subunit protein uL16 (rpl-10L).